The primary structure comprises 127 residues: uncharacterized protein (127 aa).

2 consecutive transmembrane segments (helical) span residues 48 to 68 (LYSL…PLSI) and 83 to 103 (VFLF…CLID).

The protein resides in the membrane. This is an uncharacterized protein from Saccharomyces cerevisiae (strain ATCC 204508 / S288c) (Baker's yeast).